We begin with the raw amino-acid sequence, 290 residues long: 33 kDa chaperonin (290 aa).

2 disulfides stabilise this stretch: Cys-235–Cys-237 and Cys-268–Cys-271.

It belongs to the HSP33 family. Under oxidizing conditions two disulfide bonds are formed involving the reactive cysteines. Under reducing conditions zinc is bound to the reactive cysteines and the protein is inactive.

It localises to the cytoplasm. Redox regulated molecular chaperone. Protects both thermally unfolding and oxidatively damaged proteins from irreversible aggregation. Plays an important role in the bacterial defense system toward oxidative stress. This Streptococcus equi subsp. zooepidemicus (strain MGCS10565) protein is 33 kDa chaperonin.